The sequence spans 72 residues: MAAALKKGSLVRAIAEQLQGSVELLASDGRIPSYVLETNGEILDIKGDYALVRFSRPTPNVWLRLDQLQSAA.

The protein belongs to the complex I NdhO subunit family. NDH-1 can be composed of about 15 different subunits; different subcomplexes with different compositions have been identified which probably have different functions.

It is found in the cellular thylakoid membrane. It carries out the reaction a plastoquinone + NADH + (n+1) H(+)(in) = a plastoquinol + NAD(+) + n H(+)(out). It catalyses the reaction a plastoquinone + NADPH + (n+1) H(+)(in) = a plastoquinol + NADP(+) + n H(+)(out). NDH-1 shuttles electrons from an unknown electron donor, via FMN and iron-sulfur (Fe-S) centers, to quinones in the respiratory and/or the photosynthetic chain. The immediate electron acceptor for the enzyme in this species is believed to be plastoquinone. Couples the redox reaction to proton translocation, and thus conserves the redox energy in a proton gradient. Cyanobacterial NDH-1 also plays a role in inorganic carbon-concentration. The chain is NAD(P)H-quinone oxidoreductase subunit O from Synechococcus elongatus (strain ATCC 33912 / PCC 7942 / FACHB-805) (Anacystis nidulans R2).